Reading from the N-terminus, the 279-residue chain is Ribosomal RNA small subunit methyltransferase A (279 aa).

The S-adenosyl-L-methionine site is built by leucine 42, glycine 67, glutamate 88, aspartate 113, and asparagine 129.

Belongs to the class I-like SAM-binding methyltransferase superfamily. rRNA adenine N(6)-methyltransferase family. RsmA subfamily.

It is found in the cytoplasm. It catalyses the reaction adenosine(1518)/adenosine(1519) in 16S rRNA + 4 S-adenosyl-L-methionine = N(6)-dimethyladenosine(1518)/N(6)-dimethyladenosine(1519) in 16S rRNA + 4 S-adenosyl-L-homocysteine + 4 H(+). In terms of biological role, specifically dimethylates two adjacent adenosines (A1518 and A1519) in the loop of a conserved hairpin near the 3'-end of 16S rRNA in the 30S particle. May play a critical role in biogenesis of 30S subunits. The protein is Ribosomal RNA small subunit methyltransferase A of Thermotoga maritima (strain ATCC 43589 / DSM 3109 / JCM 10099 / NBRC 100826 / MSB8).